Consider the following 730-residue polypeptide: MRVLPFLLPLIPVLLATTITDLPELVVVTVATENTDGLKRLLESAKAFDINIEVLGLGEKWNGGDTRIEQGGGQKIRILSDWIEKYKDASDTMIMFVDAYDVVFNADSTTILRKFFEHYSEKRLLFGAEPFCWPDQSLAPEYPIVEFGKRFLNSGLFMGYGPEMHKILKLKSVEDKDDDQLYYTMIYLDEKLRKELNMDLDSMSKIFQNLNGVIEDVELQFKEDGTPEAYNAAYNTKPLIVHGNGPSKSHLNYLGNYLGNRWNSQLGCRTCGLEVKESEEVPLIALNLFISKPIPFIEEVLQKIAEFDYPKEKIALYIYNNQPFSIKNIQDFLQKHGKSYYTKRVINGVTEIGDREARNEAIEWNKARNVEFAFLMDGDAYFSEPKVIKDLIQYSKTYDVGIIAPMIGQPGKLFTNFWGAIAANGYYARSEDYMAIVKGNRVGYWNVPFITSAVLFNKEKLEAMKDAYSYNKNLDPDMSMCKFARDNGHFLYIDNEKYYGFLIVSDEYAETVTEGKWHPEMWQIFENRELWEARYIHPGYHKIMEPEHVVDQACPDVYDFPLMSERFCEELIEEMEGFGRWSDGSNNDKRLAGGYENVPTRDIHMNQVGFERQWLYFMDTYVRPVQEKTFIGYYHQPVESNMMFVVRYKPEEQPSLRPHHDASTFSIDIALNKKGRDYEGGGVRYIRYNCTVPADEVGYAMMFPGRLTHLHEGLATTKGTRYIMVSFINP.

The signal sequence occupies residues 1–16 (MRVLPFLLPLIPVLLA). The interval 20–280 (TDLPELVVVT…CGLEVKESEE (261 aa)) is required for glycosyltransferase activity. UDP-binding positions include 30 to 32 (VAT) and 98 to 100 (DAY). Asp-98, Asp-101, and His-242 together coordinate Mn(2+). Position 245 to 248 (245 to 248 (GPSK)) interacts with UDP. Cys-268 and Cys-271 are joined by a disulfide. The accessory region stretch occupies residues 281 to 507 (VPLIALNLFI…YYGFLIVSDE (227 aa)). The cysteines at positions 554 and 690 are disulfide-linked. 2-oxoglutarate-binding residues include Arg-590 and Tyr-648. In terms of domain architecture, Fe2OG dioxygenase spans 639-730 (ESNMMFVVRY…RYIMVSFINP (92 aa)). 2 residues coordinate Fe cation: His-659 and Asp-661. The important for dimerization stretch occupies residues 664-707 (TFSIDIALNKKGRDYEGGGVRYIRYNCTVPADEVGYAMMFPGRL). The N-linked (GlcNAc...) asparagine glycan is linked to Asn-689. Residue His-711 participates in Fe cation binding. Arg-721 is a binding site for 2-oxoglutarate.

Homodimer. The cofactor is Fe(2+). L-ascorbate serves as cofactor. Requires Mn(2+) as cofactor.

It localises to the rough endoplasmic reticulum. The protein resides in the endoplasmic reticulum lumen. Its subcellular location is the endoplasmic reticulum membrane. It is found in the secreted. The protein localises to the extracellular space. The enzyme catalyses L-lysyl-[collagen] + 2-oxoglutarate + O2 = (5R)-5-hydroxy-L-lysyl-[collagen] + succinate + CO2. It carries out the reaction (5R)-5-hydroxy-L-lysyl-[collagen] + UDP-alpha-D-galactose = (5R)-5-O-(beta-D-galactosyl)-5-hydroxy-L-lysyl-[collagen] + UDP + H(+). It catalyses the reaction (5R)-5-O-(beta-D-galactosyl)-5-hydroxy-L-lysyl-[collagen] + UDP-alpha-D-glucose = (5R)-5-O-[alpha-D-glucosyl-(1-&gt;2)-beta-D-galactosyl]-5-hydroxy-L-lysyl-[collagen] + UDP + H(+). Functionally, multifunctional enzyme that catalyzes a series of post-translational modifications on Lys residues in procollagen. Catalyzes the formation of hydroxylysine residues in -Xaa-Lys-Gly- sequences in type IV collagens. Transfers galactose onto hydroxylysine groups, giving rise to galactosyl 5-hydroxylysine. Catalyzes the subsequent transfer of glucose moieties, giving rise to 1,2-glucosylgalactosyl-5-hydroxylysine residues. Essential for normal biosynthesis and secretion of type IV collagens. Essential for normal stability of the basement membrane. The polypeptide is Multifunctional procollagen lysine hydroxylase and glycosyltransferase (let-268) (Caenorhabditis elegans).